The following is a 140-amino-acid chain: Sex-regulated protein janus-B (140 aa).

Arg42 contacts substrate. His69 acts as the Proton acceptor in catalysis. 110 to 112 (SRT) is a binding site for substrate.

The protein belongs to the janus family.

In terms of biological role, janA and janB regulate somatic sex differentiation. This is Sex-regulated protein janus-B (janB) from Drosophila sechellia (Fruit fly).